The primary structure comprises 161 residues: Regulator of ribonuclease activity A (161 aa).

Belongs to the RraA family. As to quaternary structure, homotrimer. Binds to both RNA-binding sites in the C-terminal region of Rne and to RhlB.

It is found in the cytoplasm. Its function is as follows. Globally modulates RNA abundance by binding to RNase E (Rne) and regulating its endonucleolytic activity. Can modulate Rne action in a substrate-dependent manner by altering the composition of the degradosome. Modulates RNA-binding and helicase activities of the degradosome. In Photobacterium profundum (strain SS9), this protein is Regulator of ribonuclease activity A.